Reading from the N-terminus, the 96-residue chain is (4S)-4-hydroxy-5-phosphonooxypentane-2,3-dione isomerase (96 aa).

An ABM domain is found at 2-91 (HVTLVEINVH…MTGPRKKRLF (90 aa)).

Belongs to the LsrG family. In terms of assembly, homodimer.

It is found in the cytoplasm. It carries out the reaction (2S)-2-hydroxy-3,4-dioxopentyl phosphate = 3-hydroxy-2,4-dioxopentyl phosphate. Functionally, involved in the degradation of phospho-AI-2, thereby terminating induction of the lsr operon and closing the AI-2 signaling cycle. Catalyzes the conversion of (4S)-4-hydroxy-5-phosphonooxypentane-2,3-dione (P-DPD) to 3-hydroxy-5-phosphonooxypentane-2,4-dione (P-HPD). In Escherichia coli O9:H4 (strain HS), this protein is (4S)-4-hydroxy-5-phosphonooxypentane-2,3-dione isomerase.